Reading from the N-terminus, the 230-residue chain is Potassium/proton antiporter CemA (230 aa).

A run of 4 helical transmembrane segments spans residues 7-27 (LPSF…SFSF), 106-126 (IILH…SFFL), 145-165 (LNDS…VGFH), and 181-201 (LGWV…PVIL).

Belongs to the CemA family.

The protein resides in the plastid. It localises to the chloroplast inner membrane. The catalysed reaction is K(+)(in) + H(+)(out) = K(+)(out) + H(+)(in). Functionally, contributes to K(+)/H(+) antiport activity by supporting proton efflux to control proton extrusion and homeostasis in chloroplasts in a light-dependent manner to modulate photosynthesis. Prevents excessive induction of non-photochemical quenching (NPQ) under continuous-light conditions. Indirectly promotes efficient inorganic carbon uptake into chloroplasts. The chain is Potassium/proton antiporter CemA from Oryza nivara (Indian wild rice).